Consider the following 104-residue polypeptide: Cell division protein FtsB (104 aa).

The Cytoplasmic segment spans residues 1–3 (MGK). A helical membrane pass occupies residues 4–21 (LTLLLLVLLGWLQYSLWL). Topologically, residues 22 to 104 (GKNGIHDYTR…NAQQGRPASQ (83 aa)) are periplasmic. The stretch at 33–62 (DEDVASQQGNNAKLKARNDRLFAEIDDLNG) forms a coiled coil.

Belongs to the FtsB family. Part of a complex composed of FtsB, FtsL and FtsQ.

The protein resides in the cell inner membrane. Its function is as follows. Essential cell division protein. May link together the upstream cell division proteins, which are predominantly cytoplasmic, with the downstream cell division proteins, which are predominantly periplasmic. This chain is Cell division protein FtsB, found in Erwinia tasmaniensis (strain DSM 17950 / CFBP 7177 / CIP 109463 / NCPPB 4357 / Et1/99).